The chain runs to 274 residues: Fatty-acid O-methyltransferase (274 aa).

It belongs to the methyltransferase superfamily.

It catalyses the reaction a fatty acid + S-adenosyl-L-methionine = a fatty acid methyl ester + S-adenosyl-L-homocysteine. In terms of biological role, O-methyltransferase that modifies the hydroxy group of the fatty acids. Oleate is the most effective fatty acid acceptor. In Mycolicibacterium smegmatis (strain ATCC 700084 / mc(2)155) (Mycobacterium smegmatis), this protein is Fatty-acid O-methyltransferase (mtf2).